The sequence spans 451 residues: Tryptophan biosynthesis protein TrpCF (451 aa).

The indole-3-glycerol phosphate synthase stretch occupies residues 1 to 256 (MQETILNKII…TNIKSLIIGD (256 aa)). Residues 257–451 (NKVCGLTRII…ISLIFKKLTF (195 aa)) are N-(5'-phosphoribosyl)anthranilate isomerase.

The protein in the N-terminal section; belongs to the TrpC family. It in the C-terminal section; belongs to the TrpF family. Monomer.

It carries out the reaction N-(5-phospho-beta-D-ribosyl)anthranilate = 1-(2-carboxyphenylamino)-1-deoxy-D-ribulose 5-phosphate. The catalysed reaction is 1-(2-carboxyphenylamino)-1-deoxy-D-ribulose 5-phosphate + H(+) = (1S,2R)-1-C-(indol-3-yl)glycerol 3-phosphate + CO2 + H2O. It functions in the pathway amino-acid biosynthesis; L-tryptophan biosynthesis; L-tryptophan from chorismate: step 3/5. Its pathway is amino-acid biosynthesis; L-tryptophan biosynthesis; L-tryptophan from chorismate: step 4/5. Functionally, bifunctional enzyme that catalyzes two sequential steps of tryptophan biosynthetic pathway. The first reaction is catalyzed by the isomerase, coded by the TrpF domain; the second reaction is catalyzed by the synthase, coded by the TrpC domain. The protein is Tryptophan biosynthesis protein TrpCF (trpC) of Buchnera aphidicola subsp. Schizaphis graminum (strain Sg).